A 370-amino-acid chain; its full sequence is N-acetyltaurine hydrolase (370 aa).

A divalent metal cation is bound by residues histidine 26, histidine 28, glutamate 189, histidine 221, histidine 250, and aspartate 318.

It belongs to the metallo-dependent hydrolases superfamily. Phosphotriesterase family. Requires a divalent metal cation as cofactor.

The protein localises to the cytoplasm. It localises to the cytosol. It carries out the reaction N-acetyltaurine + H2O = taurine + acetate. Its function is as follows. N-acetyltaurine hydrolase catalyzes the hydrolysis of N-acetyltaurine into taurine and acetate. The chain is N-acetyltaurine hydrolase (pter) from Dictyostelium discoideum (Social amoeba).